The following is an 815-amino-acid chain: Leucine--tRNA ligase (815 aa).

The 'HIGH' region signature appears at P41 to H51. The 'KMSKS' region motif lies at K576 to S580. K579 contributes to the ATP binding site.

It belongs to the class-I aminoacyl-tRNA synthetase family.

Its subcellular location is the cytoplasm. The enzyme catalyses tRNA(Leu) + L-leucine + ATP = L-leucyl-tRNA(Leu) + AMP + diphosphate. This chain is Leucine--tRNA ligase, found in Pseudothermotoga lettingae (strain ATCC BAA-301 / DSM 14385 / NBRC 107922 / TMO) (Thermotoga lettingae).